The primary structure comprises 346 residues: Melanoma-associated antigen B3 (346 aa).

The tract at residues 1–35 (MPRGQKSTLHAREKRQQTRGQTQDHQGAQITATNK) is disordered. Residues 18 to 33 (TRGQTQDHQGAQITAT) show a composition bias toward polar residues. The 200-residue stretch at 111–310 (LIMKTNMLVQ…SAFQFWYEEA (200 aa)) folds into the MAGE domain.

As to expression, expressed in testis.

The polypeptide is Melanoma-associated antigen B3 (MAGEB3) (Homo sapiens (Human)).